The primary structure comprises 265 residues: MAAAAMALSSPSFAGQAVKLSPSASENSGNGRITMRKAVAKSAPSSSPWXXXXXXXXXXXXXXXXXXXXXXXXXXXXXXXXXXXXXXXXXXXXXXXXXXXXXXXXXXXXXXXXXXXXXXXXXXXXXXXXXXXXXXXXXXXXXXXXXXXXSLVHAQSILAIWACQVVLMGAVEGYRIAGGPLGEVVDPLYPGGSFDPLGLAEDPEAFAELKVKEIKNGRLAMFSMFGFFVQAIVTGKGPLENLADHLADPVNNNAWAFATNFVPGK.

The transit peptide at 1-34 directs the protein to the chloroplast; the sequence is MAAAAMALSSPSFAGQAVKLSPSASENSGNGRIT. The helical transmembrane segment at 151–171 threads the bilayer; it reads LVHAQSILAIWACQVVLMGAV. Positions 152, 156, 164, 172, 175, and 181 each coordinate chlorophyll b. Chlorophyll a is bound by residues K212, E213, N216, R218, Q230, H245, and A254. Residues 219-239 traverse the membrane as a helical segment; sequence LAMFSMFGFFVQAIVTGKGPL. F261 provides a ligand contact to chlorophyll b.

It belongs to the light-harvesting chlorophyll a/b-binding (LHC) protein family. The LHC complex consists of chlorophyll a-b binding proteins. Requires Binds at least 14 chlorophylls (8 Chl-a and 6 Chl-b) and carotenoids such as lutein and neoxanthin. as cofactor. In terms of processing, photoregulated by reversible phosphorylation of its threonine residues.

Its subcellular location is the plastid. The protein localises to the chloroplast thylakoid membrane. Functionally, the light-harvesting complex (LHC) functions as a light receptor, it captures and delivers excitation energy to photosystems with which it is closely associated. The polypeptide is Chlorophyll a-b binding protein 1A, chloroplastic (CAB1A) (Solanum lycopersicum (Tomato)).